The chain runs to 203 residues: Somatotropin (203 aa).

An N-terminal signal peptide occupies residues 1–17 (MDRVVIVLSVLSVAASS). Pyrrolidone carboxylic acid is present on Q18. H35 lines the Zn(2+) pocket. C68 and C176 are disulfide-bonded. Residue E185 participates in Zn(2+) binding. Cysteines 193 and 201 form a disulfide.

The protein belongs to the somatotropin/prolactin family.

The protein resides in the secreted. Growth hormone plays an important role in growth control and is involved in the regulation of several anabolic processes. Implicated as an osmoregulatory substance important for seawater adaptation. This Solea senegalensis (Senegalese sole) protein is Somatotropin (gh).